Reading from the N-terminus, the 954-residue chain is Leucine--tRNA ligase (954 aa).

A 'HIGH' region motif is present at residues 67-78 (PYPSGAGLHVGH). Positions 729-733 (KMGKS) match the 'KMSKS' region motif. Residue Lys-732 coordinates ATP.

Belongs to the class-I aminoacyl-tRNA synthetase family.

It localises to the cytoplasm. The enzyme catalyses tRNA(Leu) + L-leucine + ATP = L-leucyl-tRNA(Leu) + AMP + diphosphate. In Salinispora tropica (strain ATCC BAA-916 / DSM 44818 / JCM 13857 / NBRC 105044 / CNB-440), this protein is Leucine--tRNA ligase.